A 638-amino-acid polypeptide reads, in one-letter code: Plasma kallikrein (638 aa).

An N-terminal signal peptide occupies residues 1-19; the sequence is MILFNRVGYFVSLFATVSC. 4 consecutive Apple domains span residues 21–104, 111–194, 201–284, and 292–375; these read CMTQ…LKQC, CHRD…LKSC, CPMD…LLTC, and CHSK…LRLC. Intrachain disulfides connect cysteine 21-cysteine 104, cysteine 47-cysteine 77, cysteine 51-cysteine 57, cysteine 111-cysteine 194, cysteine 137-cysteine 166, cysteine 141-cysteine 147, cysteine 201-cysteine 284, cysteine 227-cysteine 256, cysteine 231-cysteine 237, cysteine 292-cysteine 375, cysteine 318-cysteine 347, cysteine 322-cysteine 328, cysteine 340-cysteine 345, cysteine 383-cysteine 503, cysteine 419-cysteine 435, cysteine 517-cysteine 584, cysteine 548-cysteine 563, and cysteine 574-cysteine 602. An N-linked (GlcNAc...) asparagine glycan is attached at asparagine 127. An N-linked (GlcNAc...) asparagine glycan is attached at asparagine 215. Asparagine 308 carries an N-linked (GlcNAc...) asparagine glycan. The Peptidase S1 domain maps to 391–626; that stretch reads IVGGTNASLG…YMDWILEKTQ (236 aa). N-linked (GlcNAc...) asparagine glycosylation is present at asparagine 396. Active-site charge relay system residues include histidine 434 and aspartate 483. Asparagine 494 carries an N-linked (GlcNAc...) asparagine glycan. Serine 578 functions as the Charge relay system in the catalytic mechanism.

The protein belongs to the peptidase S1 family. Plasma kallikrein subfamily. As to quaternary structure, forms a heterodimer with SERPINA5. The zymogen is activated by factor XIIa, which cleaves the molecule into a light chain, which contains the active site, and a heavy chain, which associates with HMW kininogen. These chains are linked by one or more disulfide bonds.

The protein resides in the secreted. It carries out the reaction Cleaves selectively Arg-|-Xaa and Lys-|-Xaa bonds, including Lys-|-Arg and Arg-|-Ser bonds in (human) kininogen to release bradykinin.. Inhibited by SERPINA5. Its function is as follows. The enzyme cleaves Lys-Arg and Arg-Ser bonds. It activates, in a reciprocal reaction, factor XII after its binding to a negatively charged surface. It also releases bradykinin from HMW kininogen and may also play a role in the renin-angiotensin system by converting prorenin into renin. This is Plasma kallikrein (Klkb1) from Mus musculus (Mouse).